The sequence spans 917 residues: Intercellular adhesion molecule 5 (917 aa).

The first 31 residues, 1–31 (MPGPSPGLRRALLGLWAALGLGILGISAVAL), serve as a signal peptide directing secretion. Residues 32–833 (EPFWADLQPR…RITVRVAGPW (802 aa)) are Extracellular-facing. 9 Ig-like C2-type domains span residues 48–130 (GGSL…PLPS), 135–235 (GENF…SLIA), 242–329 (DSER…LLTL), 337–402 (GKMV…SSEL), 408–486 (PRLD…VTLT), 491–567 (PALD…VAVT), 572–651 (PSFE…NRHG), 665–738 (PQMD…RTVT), and 745–828 (PVVA…ITVR). N-linked (GlcNAc...) (high mannose) asparagine glycosylation is present at N54. Intrachain disulfides connect C55-C99 and C59-C103. 2 N-linked (GlcNAc...) asparagine glycosylation sites follow: N74 and N137. C142 and C198 form a disulfide bridge. A Phosphothreonine modification is found at T182. Residues N195, N214, N274, N316, N371, and N397 are each glycosylated (N-linked (GlcNAc...) asparagine). C249 and C302 form a disulfide bridge. A disulfide bridge connects residues C344 and C383. Intrachain disulfides connect C415–C470, C498–C551, and C579–C644. 2 N-linked (GlcNAc...) asparagine glycosylation sites follow: N582 and N645. C672 and C724 are disulfide-bonded. 3 N-linked (GlcNAc...) asparagine glycosylation sites follow: N762, N793, and N794. A disulfide bridge connects residues C767 and C812. Residues 834 to 854 (LWVAVGGAAGGAALLAAGAGL) traverse the membrane as a helical segment. Over 855–917 (AFYVQSTACK…EVFAIQLTSS (63 aa)) the chain is Cytoplasmic. Over residues 884–893 (GAGGTPGAEG) the composition is skewed to gly residues. Positions 884 to 908 (GAGGTPGAEGGAETPGTAESPADGE) are disordered.

Belongs to the immunoglobulin superfamily. ICAM family. Post-translationally, glycosylation at Asn-54 is critical for functional folding. In terms of tissue distribution, expressed on neurons in the most rostral segment of the mammalian brain, the telencephalon.

It is found in the membrane. Functionally, ICAM proteins are ligands for the leukocyte adhesion protein LFA-1 (integrin alpha-L/beta-2). This chain is Intercellular adhesion molecule 5 (Icam5), found in Mus musculus (Mouse).